The primary structure comprises 371 residues: Peptide chain release factor 2 (371 aa).

Q252 is modified (N5-methylglutamine).

The protein belongs to the prokaryotic/mitochondrial release factor family. Post-translationally, methylated by PrmC. Methylation increases the termination efficiency of RF2.

It is found in the cytoplasm. In terms of biological role, peptide chain release factor 2 directs the termination of translation in response to the peptide chain termination codons UGA and UAA. This is Peptide chain release factor 2 from Staphylococcus haemolyticus (strain JCSC1435).